Here is a 230-residue protein sequence, read N- to C-terminus: MKPPVILINYKAYENSYGKKSIEITKKIEKVSKEYGTEIIVSVPATMIHRISEESELTVFAQHVDSGEQGARTGAILPEMIKDAGARGSLLNHSERRIRLDEMAESLERIRVLNLESVVCVDRYELVLPVALLRPNAVLIEPPELIGTGIPVSKAKPEAITKAVEEIKKTKDVYLLAGAGITTGEDVFKAIELGADGIGAASAVMKAKEPEKVVEDFVKNAIKAMEKRGE.

9–11 (NYK) serves as a coordination point for substrate. The active-site Electrophile is histidine 93. Glutamate 141 acts as the Proton acceptor in catalysis. Residues isoleucine 146, glycine 180, and 201–202 (AS) each bind substrate.

This sequence belongs to the triosephosphate isomerase family. As to quaternary structure, homotetramer; dimer of dimers.

Its subcellular location is the cytoplasm. It carries out the reaction D-glyceraldehyde 3-phosphate = dihydroxyacetone phosphate. Its pathway is carbohydrate biosynthesis; gluconeogenesis. The protein operates within carbohydrate degradation; glycolysis; D-glyceraldehyde 3-phosphate from glycerone phosphate: step 1/1. Involved in the gluconeogenesis. Catalyzes stereospecifically the conversion of dihydroxyacetone phosphate (DHAP) to D-glyceraldehyde-3-phosphate (G3P). This Sulfolobus acidocaldarius (strain ATCC 33909 / DSM 639 / JCM 8929 / NBRC 15157 / NCIMB 11770) protein is Triosephosphate isomerase.